We begin with the raw amino-acid sequence, 1077 residues long: ATP-dependent DNA helicase MPH1 (1077 aa).

A Helicase ATP-binding domain is found at 99-266 (IVHRALFENV…EVVDNLQISK (168 aa)). 112–119 (IPTGMGKT) is a binding site for ATP. The short motif at 214–217 (DEAH) is the DEAH box element. Positions 511-660 (KKVDRIRRLE…SLNYKVTDRI (150 aa)) constitute a Helicase C-terminal domain. 2 disordered regions span residues 536-556 (EKLA…ISGM) and 831-859 (TLSS…PKRQ). The span at 831-841 (TLSSDNKSTPD) shows a compositional bias: polar residues.

Belongs to the DEAD box helicase family. DEAH subfamily. FANCM sub-subfamily. As to quaternary structure, interacts with the MHF histone-fold complex to form the FANCM-MHF complex.

The protein localises to the nucleus. It carries out the reaction ATP + H2O = ADP + phosphate + H(+). Its function is as follows. ATP-dependent DNA helicase involved in DNA damage repair by homologous recombination and in genome maintenance. Capable of unwinding D-loops. Plays a role in limiting crossover recombinants during mitotic DNA double-strand break (DSB) repair. Component of a FANCM-MHF complex which promotes gene conversion at blocked replication forks, probably by reversal of the stalled fork. The sequence is that of ATP-dependent DNA helicase MPH1 from Eremothecium gossypii (strain ATCC 10895 / CBS 109.51 / FGSC 9923 / NRRL Y-1056) (Yeast).